The sequence spans 431 residues: Indole diterpene prenyltransferase nodD1 (431 aa).

85 to 86 (FI) is a binding site for L-tryptophan. R107, K194, R268, K270, Y272, and Y353 together coordinate substrate.

It belongs to the tryptophan dimethylallyltransferase family.

It participates in secondary metabolite biosynthesis. In terms of biological role, indole diterpene prenyltransferase; part of the gene cluster that mediates the biosynthesis of the indole diterpenes nodulisporic acids (NA). Nodulisporic acid A (NAA) and its chemically modified derivatives are of particular significance because of their highly potent insecticidal activity against blood-feeding arthropods and lack of observable adverse effects on mammals, in particular the tremogenicity associated with the paspaline-derived IDTs is not observed. The geranylgeranyl diphosphate (GGPP) synthase ggs1, localized outside of the cluster, is proposed to catalyze the first step in nodulisporic acid biosynthesis via conversion of farnesyl pyrophosphate and isopentyl pyrophosphate into geranylgeranyl pyrophosphate (GGPP). Condensation of indole-3-glycerol phosphate with GGPP by the prenyl transferase nodC then forms 3-geranylgeranylindole (3-GGI). Epoxidation by the FAD-dependent monooxygenase nodM leads to a single-epoxidized-GGI that is substrate of the terpene cyclase nodB for cyclization to yield emindole SB. The terminal methyl carbon, C28, of emindole SB is then oxidized by the cytochrome P450 monooxygenase nodW to produce nodulisporic acid F (NAF), the pentacyclic core of NAA. NAF is converted to nodulisporic acid E (NAE) via prenylation. This step is probably performed by one of the indole diterpene prenyltransferases nodD1 or nodD2. Several oxidation steps performed by the FAD-linked oxidoreductase nodO and one of the cytochrome P450 monooxygenase nodR, nodX or nodZ further convert NAE to nodulisporic acid D (NAD). NAD is substrate of cytochrome P450 monooxygenase nodJ to produce the precursor of nodulisporic acid C (NAC), converted to NAC by one of the indole diterpene prenyltransferases nodD1 or nodD2. The FAD-dependent monooxygenase nodY2 then oxidizes NAC to nodulisporic acid B (NAB). Finally NAB is converted to NAA by one of the cytochrome P450 monooxygenases nodR, nodX or nodZ. The protein is Indole diterpene prenyltransferase nodD1 of Hypoxylon pulicicidum.